We begin with the raw amino-acid sequence, 1072 residues long: Zn(2)-C6 fungal-type transcription factor FTF2 (1072 aa).

Residues 179 to 206 (CIACRRKKIRCSGEKPACKHCLRSRIPC) constitute a DNA-binding region (zn(2)-C6 fungal-type).

It localises to the nucleus. Functionally, zn(2)-C6 fungal-type transcription factor that has a role in conidia production and also in plant colonization. Acts as a negative regulator of the production of macroconidia and is required for full virulence and the positive regulation of SIX effectors. In addition, FTF2 is also involved in the regulation of class II hydrophobins FOXG_02746 and FOXG_02748 likely required for plant colonization. The sequence is that of Zn(2)-C6 fungal-type transcription factor FTF2 from Fusarium oxysporum f. sp. lycopersici (strain 4287 / CBS 123668 / FGSC 9935 / NRRL 34936) (Fusarium vascular wilt of tomato).